Reading from the N-terminus, the 118-residue chain is Small ribosomal subunit protein uS13 (118 aa).

The segment at 91-118 is disordered; it reads HRRGLPVRGQRTKTNARTRKGPRKPIKK.

Belongs to the universal ribosomal protein uS13 family. Part of the 30S ribosomal subunit. Forms a loose heterodimer with protein S19. Forms two bridges to the 50S subunit in the 70S ribosome.

Its function is as follows. Located at the top of the head of the 30S subunit, it contacts several helices of the 16S rRNA. In the 70S ribosome it contacts the 23S rRNA (bridge B1a) and protein L5 of the 50S subunit (bridge B1b), connecting the 2 subunits; these bridges are implicated in subunit movement. Contacts the tRNAs in the A and P-sites. In Sodalis glossinidius (strain morsitans), this protein is Small ribosomal subunit protein uS13.